The chain runs to 563 residues: Arginine--tRNA ligase (563 aa).

A 'HIGH' region motif is present at residues 121 to 131 (PNIAKPFSIGH).

Belongs to the class-I aminoacyl-tRNA synthetase family. In terms of assembly, monomer.

The protein localises to the cytoplasm. It carries out the reaction tRNA(Arg) + L-arginine + ATP = L-arginyl-tRNA(Arg) + AMP + diphosphate. The polypeptide is Arginine--tRNA ligase (argS) (Streptococcus pneumoniae serotype 4 (strain ATCC BAA-334 / TIGR4)).